Reading from the N-terminus, the 90-residue chain is Probable Fe(2+)-trafficking protein (90 aa).

It belongs to the Fe(2+)-trafficking protein family.

In terms of biological role, could be a mediator in iron transactions between iron acquisition and iron-requiring processes, such as synthesis and/or repair of Fe-S clusters in biosynthetic enzymes. This is Probable Fe(2+)-trafficking protein from Nitrosomonas europaea (strain ATCC 19718 / CIP 103999 / KCTC 2705 / NBRC 14298).